The following is a 345-amino-acid chain: Uroporphyrinogen decarboxylase (345 aa).

Substrate contacts are provided by residues 26-30 (RQAGR), D76, Y151, S205, and H321.

Belongs to the uroporphyrinogen decarboxylase family. In terms of assembly, homodimer.

It localises to the cytoplasm. The enzyme catalyses uroporphyrinogen III + 4 H(+) = coproporphyrinogen III + 4 CO2. It functions in the pathway porphyrin-containing compound metabolism; protoporphyrin-IX biosynthesis; coproporphyrinogen-III from 5-aminolevulinate: step 4/4. Catalyzes the decarboxylation of four acetate groups of uroporphyrinogen-III to yield coproporphyrinogen-III. The polypeptide is Uroporphyrinogen decarboxylase (Phenylobacterium zucineum (strain HLK1)).